Here is a 314-residue protein sequence, read N- to C-terminus: tRNA dimethylallyltransferase (314 aa).

ATP is bound at residue 6–13 (GPTAVGKT). 8-13 (TAVGKT) contributes to the substrate binding site. The segment at 31-34 (DSRQ) is interaction with substrate tRNA.

Belongs to the IPP transferase family. In terms of assembly, monomer. Mg(2+) is required as a cofactor.

It carries out the reaction adenosine(37) in tRNA + dimethylallyl diphosphate = N(6)-dimethylallyladenosine(37) in tRNA + diphosphate. In terms of biological role, catalyzes the transfer of a dimethylallyl group onto the adenine at position 37 in tRNAs that read codons beginning with uridine, leading to the formation of N6-(dimethylallyl)adenosine (i(6)A). In Pseudothermotoga lettingae (strain ATCC BAA-301 / DSM 14385 / NBRC 107922 / TMO) (Thermotoga lettingae), this protein is tRNA dimethylallyltransferase.